The chain runs to 114 residues: NADH-ubiquinone oxidoreductase chain 3 (114 aa).

A run of 3 helical transmembrane segments spans residues 3-23, 52-72, and 86-106; these read LITL…INTY, IQFF…VLLL, and TILL…YEWL.

It belongs to the complex I subunit 3 family.

The protein resides in the mitochondrion membrane. It carries out the reaction a ubiquinone + NADH + 5 H(+)(in) = a ubiquinol + NAD(+) + 4 H(+)(out). In terms of biological role, core subunit of the mitochondrial membrane respiratory chain NADH dehydrogenase (Complex I) that is believed to belong to the minimal assembly required for catalysis. Complex I functions in the transfer of electrons from NADH to the respiratory chain. The immediate electron acceptor for the enzyme is believed to be ubiquinone. The polypeptide is NADH-ubiquinone oxidoreductase chain 3 (MT-ND3) (Lycodon semicarinatus (Ryukyu odd-tooth snake)).